We begin with the raw amino-acid sequence, 151 residues long: Ribosome maturation factor RimP (151 aa).

Belongs to the RimP family.

Its subcellular location is the cytoplasm. Required for maturation of 30S ribosomal subunits. The sequence is that of Ribosome maturation factor RimP from Shewanella baltica (strain OS223).